Here is a 120-residue protein sequence, read N- to C-terminus: C-C motif chemokine 2 (120 aa).

The first 23 residues, 1–23 (MQRSSVLLCLLVIEATFCSLLMA), serve as a signal peptide directing secretion. Pyrrolidone carboxylic acid is present on Gln24. 2 disulfides stabilise this stretch: Cys33–Cys57 and Cys34–Cys73. The tract at residues 91–120 (RTQQKQNSTAPQTSKPLNIRFTTQDPKNRS) is disordered. Residues 93-120 (QQKQNSTAPQTSKPLNIRFTTQDPKNRS) show a composition bias toward polar residues. An N-linked (GlcNAc...) asparagine glycan is attached at Asn97.

The protein belongs to the intercrine beta (chemokine CC) family. As to quaternary structure, monomer or homodimer; in equilibrium. Is tethered on endothelial cells by glycosaminoglycan (GAG) side chains of proteoglycans. Interacts with TNFAIP6 (via Link domain). Post-translationally, processing at the N-terminus can regulate receptor and target cell selectivity. Deletion of the N-terminal residue converts it from an activator of basophil to an eosinophil chemoattractant. In terms of processing, N-Glycosylated.

It is found in the secreted. In terms of biological role, acts as a ligand for C-C chemokine receptor CCR2. Signals through binding and activation of CCR2 and induces a strong chemotactic response and mobilization of intracellular calcium ions. Exhibits a chemotactic activity for monocytes and basophils but not neutrophils or eosinophils. Plays an important role in mediating peripheral nerve injury-induced neuropathic pain. Increases NMDA-mediated synaptic transmission in both dopamine D1 and D2 receptor-containing neurons, which may be caused by MAPK/ERK-dependent phosphorylation of GRIN2B/NMDAR2B. The protein is C-C motif chemokine 2 (CCL2) of Cavia porcellus (Guinea pig).